A 785-amino-acid polypeptide reads, in one-letter code: Endonuclease MutS2 (785 aa).

335–342 (GPNTGGKT) contributes to the ATP binding site. Positions 710-785 (LDLRGERYED…GNGVTIVEFK (76 aa)) constitute a Smr domain.

The protein belongs to the DNA mismatch repair MutS family. MutS2 subfamily. In terms of assembly, homodimer. Binds to stalled ribosomes, contacting rRNA.

In terms of biological role, endonuclease that is involved in the suppression of homologous recombination and thus may have a key role in the control of bacterial genetic diversity. Functionally, acts as a ribosome collision sensor, splitting the ribosome into its 2 subunits. Detects stalled/collided 70S ribosomes which it binds and splits by an ATP-hydrolysis driven conformational change. Acts upstream of the ribosome quality control system (RQC), a ribosome-associated complex that mediates the extraction of incompletely synthesized nascent chains from stalled ribosomes and their subsequent degradation. Probably generates substrates for RQC. The chain is Endonuclease MutS2 from Listeria welshimeri serovar 6b (strain ATCC 35897 / DSM 20650 / CCUG 15529 / CIP 8149 / NCTC 11857 / SLCC 5334 / V8).